Consider the following 285-residue polypeptide: GPN-loop GTPase 3 (285 aa).

Residue 13 to 18 participates in GTP binding; it reads GSGKST. The short motif at 72–74 is the Gly-Pro-Asn (GPN)-loop; involved in dimer interface element; it reads GPN. 174-177 is a GTP binding site; sequence TKMD. The tract at residues 262-285 is disordered; that stretch reads EPKEVDEEPSNSNFDAFFQDTADS.

The protein belongs to the GPN-loop GTPase family. Heterodimer with gpn1. Binds to RNA polymerase II (RNAPII).

Small GTPase required for proper localization of RNA polymerase II (RNAPII). May act at an RNAP assembly step prior to nuclear import. This is GPN-loop GTPase 3 from Danio rerio (Zebrafish).